Consider the following 210-residue polypeptide: Uracil phosphoribosyltransferase (210 aa).

5-phospho-alpha-D-ribose 1-diphosphate-binding positions include Arg78, Arg103, and 130–138 (DPMLATGGS). Uracil is bound by residues Ile193 and 198-200 (GDA). Asp199 lines the 5-phospho-alpha-D-ribose 1-diphosphate pocket.

The protein belongs to the UPRTase family. Requires Mg(2+) as cofactor.

The enzyme catalyses UMP + diphosphate = 5-phospho-alpha-D-ribose 1-diphosphate + uracil. Its pathway is pyrimidine metabolism; UMP biosynthesis via salvage pathway; UMP from uracil: step 1/1. With respect to regulation, allosterically activated by GTP. Catalyzes the conversion of uracil and 5-phospho-alpha-D-ribose 1-diphosphate (PRPP) to UMP and diphosphate. The sequence is that of Uracil phosphoribosyltransferase from Salinibacter ruber (strain DSM 13855 / M31).